A 184-amino-acid chain; its full sequence is ATP synthase subunit b, chloroplastic (184 aa).

A helical membrane pass occupies residues 27–49; sequence LATNLINLSVVLGVLIFFGKGVL.

It belongs to the ATPase B chain family. F-type ATPases have 2 components, F(1) - the catalytic core - and F(0) - the membrane proton channel. F(1) has five subunits: alpha(3), beta(3), gamma(1), delta(1), epsilon(1). F(0) has four main subunits: a(1), b(1), b'(1) and c(10-14). The alpha and beta chains form an alternating ring which encloses part of the gamma chain. F(1) is attached to F(0) by a central stalk formed by the gamma and epsilon chains, while a peripheral stalk is formed by the delta, b and b' chains.

The protein resides in the plastid. It is found in the chloroplast thylakoid membrane. In terms of biological role, f(1)F(0) ATP synthase produces ATP from ADP in the presence of a proton or sodium gradient. F-type ATPases consist of two structural domains, F(1) containing the extramembraneous catalytic core and F(0) containing the membrane proton channel, linked together by a central stalk and a peripheral stalk. During catalysis, ATP synthesis in the catalytic domain of F(1) is coupled via a rotary mechanism of the central stalk subunits to proton translocation. Functionally, component of the F(0) channel, it forms part of the peripheral stalk, linking F(1) to F(0). The protein is ATP synthase subunit b, chloroplastic of Spinacia oleracea (Spinach).